The chain runs to 662 residues: Probable protein phosphatase CG10417 (662 aa).

A PPM-type phosphatase domain is found at 23 to 564 (AVGASSMQGW…DNMTAVIVQF (542 aa)). Asp-57 and Gly-58 together coordinate Mn(2+). Disordered stretches follow at residues 219–275 (DGVA…FKHT) and 288–374 (GSND…DEDQ). Polar residues-rich tracts occupy residues 238 to 252 (DSNT…STKN), 261 to 275 (NDQN…FKHT), and 288 to 319 (GSND…INSS). Phosphoserine is present on residues Ser-289 and Ser-306. Over residues 320 to 334 (QDDEFTDDDADYEEN) the composition is skewed to acidic residues. Polar residues predominate over residues 337-347 (VKSPDTSSAES). The span at 349–374 (DCTENDDDGDEDGNEDSDEEETDEDQ) shows a compositional bias: acidic residues. 2 residues coordinate Mn(2+): Asp-506 and Asp-555. Polar residues predominate over residues 591-609 (VSHSLNDQSASKRCASQNA). The segment at 591-662 (VSHSLNDQSA…KEVTIIVSSS (72 aa)) is disordered. Phosphoserine occurs at positions 592, 594, and 599. The segment covering 616–637 (LEKNNSKRLKTDLEQENIKDRT) has biased composition (basic and acidic residues). Thr-637 carries the post-translational modification Phosphothreonine. Ser-639 and Ser-641 each carry phosphoserine.

It belongs to the PP2C family. Mg(2+) serves as cofactor. Requires Mn(2+) as cofactor.

It carries out the reaction O-phospho-L-seryl-[protein] + H2O = L-seryl-[protein] + phosphate. It catalyses the reaction O-phospho-L-threonyl-[protein] + H2O = L-threonyl-[protein] + phosphate. This chain is Probable protein phosphatase CG10417, found in Drosophila melanogaster (Fruit fly).